A 289-amino-acid chain; its full sequence is Ribosomal RNA small subunit methyltransferase H (289 aa).

Residues 40–42, D60, F84, D106, and Q113 contribute to the S-adenosyl-L-methionine site; that span reads GGH.

The protein belongs to the methyltransferase superfamily. RsmH family.

The protein resides in the cytoplasm. The catalysed reaction is cytidine(1402) in 16S rRNA + S-adenosyl-L-methionine = N(4)-methylcytidine(1402) in 16S rRNA + S-adenosyl-L-homocysteine + H(+). Its function is as follows. Specifically methylates the N4 position of cytidine in position 1402 (C1402) of 16S rRNA. The sequence is that of Ribosomal RNA small subunit methyltransferase H from Haemophilus influenzae (strain PittGG).